The sequence spans 150 residues: 3-hydroxyacyl-[acyl-carrier-protein] dehydratase FabZ (150 aa).

Residue His-51 is part of the active site.

Belongs to the thioester dehydratase family. FabZ subfamily.

The protein localises to the cytoplasm. It carries out the reaction a (3R)-hydroxyacyl-[ACP] = a (2E)-enoyl-[ACP] + H2O. Involved in unsaturated fatty acids biosynthesis. Catalyzes the dehydration of short chain beta-hydroxyacyl-ACPs and long chain saturated and unsaturated beta-hydroxyacyl-ACPs. This Geobacter metallireducens (strain ATCC 53774 / DSM 7210 / GS-15) protein is 3-hydroxyacyl-[acyl-carrier-protein] dehydratase FabZ.